The following is a 504-amino-acid chain: MNEKQKKTQKLRARLPRGFVDRSAADIRAVDEMIAKIREVYERYGFDPVETPLFEYTDALGKFLPDSDRPNEGVFSLTDDDDQWLSLRYDLTAPLARHVAENFNEIQLPYRTYRAGYVFRNEKPGPGRFRQFMQFDADTVGAAGVQADAEMCMMMADTMEALGIARGDYVIRVNNRKVLDGVLEAIGLGGVEQTNTRLTVLRAIDKLDKFGPEGVRLLLGEGRKDESGDFTKGAGLNEEQIGKILFFVGITDYARSADELAALVAGTARGAEGVNELNTIRGLVLSAGYEADRIKIDPSVVRGLEYYTGPVFEAELQFAVTNEKGEKVVFGSVGGGGRYDGLVSRFMGQPVPATGFSIGVSRLMTALKNLGKLGAEQVTAPVVVCVMDRDIESMGRYQRFVQDLRHAGIRAEMYQGNKKNFGDQLKYADRRGSPIAVIQGGDERASGVVQIKDLIEGKRLSGEIEDNVAWREARVAQVSVPEGELVAKVRQILAEQAEDRKRAG.

This sequence belongs to the class-II aminoacyl-tRNA synthetase family. In terms of assembly, homodimer.

It is found in the cytoplasm. The enzyme catalyses tRNA(His) + L-histidine + ATP = L-histidyl-tRNA(His) + AMP + diphosphate + H(+). In Rhizobium meliloti (strain 1021) (Ensifer meliloti), this protein is Histidine--tRNA ligase (hisS).